The chain runs to 177 residues: Large ribosomal subunit protein uL10 (177 aa).

It belongs to the universal ribosomal protein uL10 family. Part of the ribosomal stalk of the 50S ribosomal subunit. The N-terminus interacts with L11 and the large rRNA to form the base of the stalk. The C-terminus forms an elongated spine to which L12 dimers bind in a sequential fashion forming a multimeric L10(L12)X complex.

In terms of biological role, forms part of the ribosomal stalk, playing a central role in the interaction of the ribosome with GTP-bound translation factors. The chain is Large ribosomal subunit protein uL10 from Thermoanaerobacter sp. (strain X514).